Reading from the N-terminus, the 505-residue chain is L-arabinose isomerase (505 aa).

Positions 310, 337, 354, and 453 each coordinate Mn(2+).

Belongs to the arabinose isomerase family. Mn(2+) is required as a cofactor.

It catalyses the reaction beta-L-arabinopyranose = L-ribulose. Its pathway is carbohydrate degradation; L-arabinose degradation via L-ribulose; D-xylulose 5-phosphate from L-arabinose (bacterial route): step 1/3. Functionally, catalyzes the conversion of L-arabinose to L-ribulose. The chain is L-arabinose isomerase from Clavibacter sepedonicus (Clavibacter michiganensis subsp. sepedonicus).